Here is a 652-residue protein sequence, read N- to C-terminus: Epithelial sodium channel subunit gamma (652 aa).

Over methionine 1–leucine 54 the chain is Cytoplasmic. Residues leucine 55–isoleucine 75 form a helical membrane-spanning segment. Residues serine 76–glutamine 537 lie on the Extracellular side of the membrane. Cystine bridges form between cysteine 100-cysteine 286, cysteine 210-cysteine 217, cysteine 263-cysteine 270, cysteine 375-cysteine 460, cysteine 397-cysteine 456, cysteine 401-cysteine 452, cysteine 410-cysteine 437, and cysteine 412-cysteine 426. Residues arginine 137–serine 224 are gating release of inhibition by proteolysis (GRIP); protease-sensitive region that is responsible for the proteolytic activation of the channel. Asparagine 212 is a glycosylation site (N-linked (GlcNAc...) asparagine). Asparagine 500 is a glycosylation site (N-linked (GlcNAc...) asparagine). The helical transmembrane segment at leucine 538 to isoleucine 558 threads the bilayer. Over aspartate 559–histidine 652 the chain is Cytoplasmic. The interval serine 610 to asparagine 631 is disordered. The PY motif; recruits WW domain-containing proteins and is thereby required for ubiquitination and inhibition of the channel by NEDD4 and NEDD4L motif lies at proline 626–tyrosine 630.

This sequence belongs to the amiloride-sensitive sodium channel (TC 1.A.6) family. SCNN1G subfamily. Component of the heterotrimeric epithelial sodium channel (ENaC) composed of an alpha/SCNN1A, a beta/SCNN1B and a gamma/SCNN1G subunit. An additional delta/SCNN1D subunit can replace the alpha/SCNN1A subunit to form an alternative channel with specific properties. Interacts with WWP1 (via WW domains). Interacts with WWP2 (via WW domains); inhibits the channel. Interacts with the full-length immature form of PCSK9 (pro-PCSK9); inhibits ENaC by promoting its proteasomal degradation. Interacts with BPIFA1; the interaction is indirect via SCNN1B and inhibits the proteolytic maturation of SCNN1A and SCNN1G and the activation of ENaC. In terms of processing, phosphorylated on serine and threonine residues. Aldosterone and insulin increase the basal level of phosphorylation. Post-translationally, ubiquitinated. Can be ubiquitinated at multiple sites and undergo monoubiquitination and polyubiquitination. Ubiquitination by NEDD4 or NEDD4L inhibits the ENaC channel through endocytosis, intracellular retention and degradation of its individual subunits. ENaC is activated through the proteolytic maturation of its subunits. Furin cleaves the SCNN1G subunit first, followed by cleavage by prostasin (PRSS8), which results in a stepwise increase in the open probability of the channel due to the release of an inhibitory tract. BPIFA1, which is recruited by the SCNN1B subunit, prevents the proteolytic activation of ENaC. In terms of processing, N-glycosylated. N-linked glycans are processed to complex type during ENaC complex assembly and transport to the plasma membrane.

The protein localises to the apical cell membrane. The catalysed reaction is Na(+)(in) = Na(+)(out). Its activity is regulated as follows. Originally identified and characterized by its inhibition by the diuretic drug amiloride. Its function is as follows. This is one of the three pore-forming subunits of the heterotrimeric epithelial sodium channel (ENaC), a critical regulator of sodium balance and fluid homeostasis. ENaC operates in epithelial tissues, where it mediates the electrodiffusion of sodium ions from extracellular fluid through the apical membrane of cells, with water following osmotically. It plays a key role in maintaining sodium homeostasis through electrogenic sodium reabsorption in the kidneys. Additionally, ENaC is essential for airway surface liquid homeostasis, which is crucial for proper mucus clearance. In Bos taurus (Bovine), this protein is Epithelial sodium channel subunit gamma.